Reading from the N-terminus, the 257-residue chain is Acetylglutamate kinase (257 aa).

Substrate is bound by residues 43–44 (GG), R65, and N157.

The protein belongs to the acetylglutamate kinase family. ArgB subfamily.

It is found in the cytoplasm. The catalysed reaction is N-acetyl-L-glutamate + ATP = N-acetyl-L-glutamyl 5-phosphate + ADP. The protein operates within amino-acid biosynthesis; L-arginine biosynthesis; N(2)-acetyl-L-ornithine from L-glutamate: step 2/4. Its function is as follows. Catalyzes the ATP-dependent phosphorylation of N-acetyl-L-glutamate. The chain is Acetylglutamate kinase from Mannheimia succiniciproducens (strain KCTC 0769BP / MBEL55E).